A 697-amino-acid polypeptide reads, in one-letter code: Potassium-transporting ATPase ATP-binding subunit (697 aa).

Helical transmembrane passes span 55–75 (PIMF…FLPS), 79–99 (SIPG…VLFA), 245–265 (LTLI…YLGF), and 271–291 (VLVA…LSAI). Catalysis depends on aspartate 324, which acts as the 4-aspartylphosphate intermediate. ATP contacts are provided by residues aspartate 361, glutamate 365, 393–400 (FKAETRMS), and lysine 412. 2 residues coordinate Mg(2+): aspartate 535 and aspartate 539. 3 consecutive transmembrane segments (helical) span residues 605-625 (FAII…LNIM), 633-653 (AILS…PLAM), and 677-697 (GGVI…GLFI).

The protein belongs to the cation transport ATPase (P-type) (TC 3.A.3) family. Type IA subfamily. As to quaternary structure, the system is composed of three essential subunits: KdpA, KdpB and KdpC.

It is found in the cell membrane. The enzyme catalyses K(+)(out) + ATP + H2O = K(+)(in) + ADP + phosphate + H(+). Its function is as follows. Part of the high-affinity ATP-driven potassium transport (or Kdp) system, which catalyzes the hydrolysis of ATP coupled with the electrogenic transport of potassium into the cytoplasm. This subunit is responsible for energy coupling to the transport system and for the release of the potassium ions to the cytoplasm. The chain is Potassium-transporting ATPase ATP-binding subunit from Bacillus anthracis (strain CDC 684 / NRRL 3495).